Reading from the N-terminus, the 194-residue chain is Fe/S biogenesis protein NfuA (194 aa).

C152 and C155 together coordinate [4Fe-4S] cluster.

This sequence belongs to the NfuA family. As to quaternary structure, homodimer. Requires [4Fe-4S] cluster as cofactor.

Its function is as follows. Involved in iron-sulfur cluster biogenesis. Binds a 4Fe-4S cluster, can transfer this cluster to apoproteins, and thereby intervenes in the maturation of Fe/S proteins. Could also act as a scaffold/chaperone for damaged Fe/S proteins. The chain is Fe/S biogenesis protein NfuA from Azotobacter vinelandii (strain DJ / ATCC BAA-1303).